A 322-amino-acid chain; its full sequence is DNA repair and recombination protein RadA (322 aa).

105 to 112 contributes to the ATP binding site; the sequence is GMYGSGKT.

This sequence belongs to the eukaryotic RecA-like protein family.

Involved in DNA repair and in homologous recombination. Binds and assemble on single-stranded DNA to form a nucleoprotein filament. Hydrolyzes ATP in a ssDNA-dependent manner and promotes DNA strand exchange between homologous DNA molecules. The sequence is that of DNA repair and recombination protein RadA from Methanococcus maripaludis (strain C7 / ATCC BAA-1331).